A 37-amino-acid chain; its full sequence is Mu-agatoxin-Aa1d (37 aa).

Intrachain disulfides connect Cys-2-Cys-18, Cys-9-Cys-23, Cys-17-Cys-33, and Cys-25-Cys-31. Asn-37 carries the asparagine amide modification.

This sequence belongs to the neurotoxin 07 (Beta/delta-agtx) family. 03 (aga-4) subfamily. Aga sub-subfamily. In terms of tissue distribution, expressed by the venom gland.

Its subcellular location is the secreted. In terms of biological role, insecticidal neurotoxin that induces an irreversible spastic paralysis when injected into insects. Modifies presynaptic voltage-gated sodium channels (Nav), causing them to open at the normal resting potential of the nerve. This leads to spontaneous release of neurotransmitter and repetitive action potentials in motor neurons. This Agelenopsis aperta (North American funnel-web spider) protein is Mu-agatoxin-Aa1d.